We begin with the raw amino-acid sequence, 92 residues long: Small ribosomal subunit protein uS19 (92 aa).

This sequence belongs to the universal ribosomal protein uS19 family.

In terms of biological role, protein S19 forms a complex with S13 that binds strongly to the 16S ribosomal RNA. This is Small ribosomal subunit protein uS19 from Parvibaculum lavamentivorans (strain DS-1 / DSM 13023 / NCIMB 13966).